The primary structure comprises 21 residues: Tertiapin (21 aa).

2 disulfides stabilise this stretch: cysteine 3–cysteine 14 and cysteine 5–cysteine 18.

Oxidation of Met-13 results in the loss of biological activity. Post-translationally, an amidation at Lys-21 is suggested in Ref.1. In terms of tissue distribution, expressed by the venom gland.

It is found in the secreted. Presynaptic neurotoxin that blocks the inwardly rectifying Kir1.1/KCNJ1 and Kir3.1/3.4 (KCNJ3/KCNJ5) potassium channels with high affinity by binding to the M1-M2 linker region of these channels in a 1:1 stoichiometry. It may block the potassium channel pore by occluding its alpha helix into the channel vestibule. Tertiapin-Q also inhibits calcium-activated large conductance BK-type (KCNMA) potassium channels in a concentration-, and voltage-dependent manner, in addition to inhibiting Kir3.1/3.2 (KCNJ3/KCNJ6) heteromultimers potassium channels. It can prevent dose-dependently acetylcholine(ACh)-induced atrioventricular blocks in mammalian hearts, as KCNJ3/KCNJ5 channels (also named I(KACh), because these channels are activated by ACh) are found in mammalian myocytes. Interacts specifically with calmodulin in the presence of calcium. The chain is Tertiapin from Apis mellifera (Honeybee).